The primary structure comprises 114 residues: MSKSLGELGERIIGQYLEKKGYRLIETNYRTKLGEIDIIAYKGTIIAFVEVKTRRSQSYGMPCEAVNWQKQQRLHRVASHYIARKGLINYDFRFDVAEVIIGKEKKIHYINNAF.

Belongs to the UPF0102 family.

In Alkaliphilus metalliredigens (strain QYMF), this protein is UPF0102 protein Amet_2739.